Here is a 211-residue protein sequence, read N- to C-terminus: Thiamine-phosphate synthase (211 aa).

Residues 37–41 and Asn-69 each bind 4-amino-2-methyl-5-(diphosphooxymethyl)pyrimidine; that span reads QLRIK. Residues Asp-70 and Asp-89 each contribute to the Mg(2+) site. A 4-amino-2-methyl-5-(diphosphooxymethyl)pyrimidine-binding site is contributed by Ser-108. 134–136 lines the 2-[(2R,5Z)-2-carboxy-4-methylthiazol-5(2H)-ylidene]ethyl phosphate pocket; that stretch reads TQT. Lys-137 provides a ligand contact to 4-amino-2-methyl-5-(diphosphooxymethyl)pyrimidine. Residues Gly-166 and 186-187 contribute to the 2-[(2R,5Z)-2-carboxy-4-methylthiazol-5(2H)-ylidene]ethyl phosphate site; that span reads VS.

Belongs to the thiamine-phosphate synthase family. Mg(2+) serves as cofactor.

The catalysed reaction is 2-[(2R,5Z)-2-carboxy-4-methylthiazol-5(2H)-ylidene]ethyl phosphate + 4-amino-2-methyl-5-(diphosphooxymethyl)pyrimidine + 2 H(+) = thiamine phosphate + CO2 + diphosphate. The enzyme catalyses 2-(2-carboxy-4-methylthiazol-5-yl)ethyl phosphate + 4-amino-2-methyl-5-(diphosphooxymethyl)pyrimidine + 2 H(+) = thiamine phosphate + CO2 + diphosphate. It catalyses the reaction 4-methyl-5-(2-phosphooxyethyl)-thiazole + 4-amino-2-methyl-5-(diphosphooxymethyl)pyrimidine + H(+) = thiamine phosphate + diphosphate. Its pathway is cofactor biosynthesis; thiamine diphosphate biosynthesis; thiamine phosphate from 4-amino-2-methyl-5-diphosphomethylpyrimidine and 4-methyl-5-(2-phosphoethyl)-thiazole: step 1/1. Condenses 4-methyl-5-(beta-hydroxyethyl)thiazole monophosphate (THZ-P) and 2-methyl-4-amino-5-hydroxymethyl pyrimidine pyrophosphate (HMP-PP) to form thiamine monophosphate (TMP). The protein is Thiamine-phosphate synthase of Salmonella paratyphi A (strain ATCC 9150 / SARB42).